A 551-amino-acid polypeptide reads, in one-letter code: RCC1 and BTB domain-containing protein 2 (551 aa).

RCC1 repeat units follow at residues 64-115 (NDEI…VLAT), 117-169 (DGEV…VLTS), 171-222 (GEVF…AVVD), 223-274 (TGEV…VLTD), 276-326 (GQIY…AAKS), and 328-382 (GGHV…TVAE). A BTB domain is found at 394–457 (ADLKFLVDGK…LYTDNISLPP (64 aa)).

The protein resides in the cytoplasmic vesicle. Its subcellular location is the secretory vesicle. It localises to the acrosome. The sequence is that of RCC1 and BTB domain-containing protein 2 (Rcbtb2) from Rattus norvegicus (Rat).